Reading from the N-terminus, the 176-residue chain is Co-chaperone protein HscB homolog (176 aa).

The region spanning 7 to 79 (THFSLFGLPE…LKRATYLLHL (73 aa)) is the J domain.

The protein belongs to the HscB family. Interacts with HscA and stimulates its ATPase activity.

Co-chaperone involved in the maturation of iron-sulfur cluster-containing proteins. Seems to help targeting proteins to be folded toward HscA. This chain is Co-chaperone protein HscB homolog, found in Ralstonia nicotianae (strain ATCC BAA-1114 / GMI1000) (Ralstonia solanacearum).